The sequence spans 221 residues: Stromal cell-derived factor 2-like protein 1 (221 aa).

The signal sequence occupies residues 1 to 28; that stretch reads MWSAGSGRAAGPALLGILLALSLSGGRA. MIR domains are found at residues 33 to 87, 95 to 150, and 151 to 205; these read AGLV…IRGG, GSPV…VRCS, and GQHW…AMEG. Residues 218 to 221 carry the Prevents secretion from ER motif; the sequence is HDEL.

It is found in the endoplasmic reticulum lumen. This Bos taurus (Bovine) protein is Stromal cell-derived factor 2-like protein 1 (SDF2L1).